A 303-amino-acid chain; its full sequence is Probable 5-dehydro-4-deoxyglucarate dehydratase (303 aa).

It belongs to the DapA family.

It catalyses the reaction 5-dehydro-4-deoxy-D-glucarate + H(+) = 2,5-dioxopentanoate + CO2 + H2O. The protein operates within carbohydrate acid metabolism; D-glucarate degradation; 2,5-dioxopentanoate from D-glucarate: step 2/2. The polypeptide is Probable 5-dehydro-4-deoxyglucarate dehydratase (Pseudomonas putida (strain ATCC 700007 / DSM 6899 / JCM 31910 / BCRC 17059 / LMG 24140 / F1)).